The sequence spans 304 residues: Small ribosomal subunit biogenesis GTPase RsgA (304 aa).

The 160-residue stretch at histidine 70–leucine 229 folds into the CP-type G domain. Residues threonine 119–aspartate 122 and glycine 172–threonine 180 contribute to the GTP site. Residues cysteine 253, cysteine 259, histidine 261, and cysteine 267 each coordinate Zn(2+).

The protein belongs to the TRAFAC class YlqF/YawG GTPase family. RsgA subfamily. Monomer. Associates with 30S ribosomal subunit, binds 16S rRNA. Requires Zn(2+) as cofactor.

It localises to the cytoplasm. One of several proteins that assist in the late maturation steps of the functional core of the 30S ribosomal subunit. Helps release RbfA from mature subunits. May play a role in the assembly of ribosomal proteins into the subunit. Circularly permuted GTPase that catalyzes slow GTP hydrolysis, GTPase activity is stimulated by the 30S ribosomal subunit. This Phytoplasma mali (strain AT) protein is Small ribosomal subunit biogenesis GTPase RsgA.